A 458-amino-acid polypeptide reads, in one-letter code: Cysteine--tRNA ligase (458 aa).

Zn(2+) is bound at residue Cys29. The 'HIGH' region signature appears at Pro31–Asn41. Cys214, His239, and Glu243 together coordinate Zn(2+). The short motif at Lys272–Ser276 is the 'KMSKS' region element. Lys275 is a binding site for ATP.

The protein belongs to the class-I aminoacyl-tRNA synthetase family. As to quaternary structure, monomer. It depends on Zn(2+) as a cofactor.

The protein localises to the cytoplasm. It carries out the reaction tRNA(Cys) + L-cysteine + ATP = L-cysteinyl-tRNA(Cys) + AMP + diphosphate. The polypeptide is Cysteine--tRNA ligase (Rickettsia bellii (strain OSU 85-389)).